The following is a 156-amino-acid chain: Transcription elongation factor GreA (156 aa).

Residues 1–32 (MKKVRLTREGYEKLKKELEDLKRKFMYEISER) are a coiled coil.

Belongs to the GreA/GreB family.

Its function is as follows. Necessary for efficient RNA polymerase transcription elongation past template-encoded arresting sites. The arresting sites in DNA have the property of trapping a certain fraction of elongating RNA polymerases that pass through, resulting in locked ternary complexes. Cleavage of the nascent transcript by cleavage factors such as GreA or GreB allows the resumption of elongation from the new 3'terminus. GreA releases sequences of 2 to 3 nucleotides. The polypeptide is Transcription elongation factor GreA (Thermotoga maritima (strain ATCC 43589 / DSM 3109 / JCM 10099 / NBRC 100826 / MSB8)).